The sequence spans 258 residues: Protein UL24 homolog (258 aa).

It belongs to the herpesviridae UL24 family.

The protein resides in the virion. It is found in the host cytoplasm. Its subcellular location is the host nucleus. The protein localises to the host nucleolus. It localises to the host Golgi apparatus. May participate in nuclear egress of viral particles. Plays a role in the dispersal of several host nucleolar proteins including NCL/nucleolin and NPM1. Since deletion of host NCL/nucleolin negatively impact on nuclear egress, UL24 supposedly acts on this process through its effect on host nucleoli. The sequence is that of Protein UL24 homolog from Homo sapiens (Human).